Consider the following 513-residue polypeptide: ATP synthase subunit alpha (513 aa).

Glycine 169–threonine 176 is an ATP binding site.

The protein belongs to the ATPase alpha/beta chains family. In terms of assembly, F-type ATPases have 2 components, CF(1) - the catalytic core - and CF(0) - the membrane proton channel. CF(1) has five subunits: alpha(3), beta(3), gamma(1), delta(1), epsilon(1). CF(0) has three main subunits: a(1), b(2) and c(9-12). The alpha and beta chains form an alternating ring which encloses part of the gamma chain. CF(1) is attached to CF(0) by a central stalk formed by the gamma and epsilon chains, while a peripheral stalk is formed by the delta and b chains.

It localises to the cell inner membrane. It catalyses the reaction ATP + H2O + 4 H(+)(in) = ADP + phosphate + 5 H(+)(out). Functionally, produces ATP from ADP in the presence of a proton gradient across the membrane. The alpha chain is a regulatory subunit. This Haemophilus influenzae (strain PittEE) protein is ATP synthase subunit alpha.